Here is a 603-residue protein sequence, read N- to C-terminus: MRRKEKRLLQAVALALAALVLLPNVGLWALYRERQPDGSPGGLGAAVAPAAVQELHSRQKKTFFLGAEQRLKDWHNKEAIRRDAQRVGYGEQGKPYPMTDAERVDQAYRENGFNIYVSDKISLNRSLPDIRHPNCNSKLYLETLPNTSIIIPFHNEGWSSLLRTVHSVLNRSPPELVAEIVLVDDFSDREHLKKPLEDYMALFPSVRILRTKKREGLIRTRMLGASAATGDVVTFLDSHCEANVNWLPPLLDRIARNRKTIVCPMIDVIDHDDFRYETQAGDAMRGAFDWEMYYKRIPIPPELQKADPSDPFESPVMAGGLFAVDRKWFWELGGYDPGLEIWGGEQYEISFKVWMCGGRMEDIPCSRVGHIYRKYVPYKVPAGVSLARNLKRVAEVWMDEYAEYIYQRRPEYRHLSAGDVVAQKKLRVSLNCKSFKWFMTKIAWDLPKFYPPVEPPAAAWGEIRNVGTGLCTDTKLGTLGSPLRLETCIRGRGEAAWNSMQVFTFTWREDIRPGDPQHTKKFCFDAVSHTSPVTLYDCHSMKGNQLWKYRKDKTLYHPVSGSCMDCSESDHRVFMNTCNPSSLTQQWLFEHTNSTVLENFNKN.

The Cytoplasmic portion of the chain corresponds to 1–11 (MRRKEKRLLQA). The chain crosses the membrane as a helical; Signal-anchor for type II membrane protein span at residues 12-31 (VALALAALVLLPNVGLWALY). Residues 32-603 (RERQPDGSPG…STVLENFNKN (572 aa)) lie on the Lumenal side of the membrane. Residues N124 and N146 are each glycosylated (N-linked (GlcNAc...) asparagine). Cystine bridges form between C135/C365, C356/C432, C471/C488, C523/C538, and C563/C578. Residues 144 to 253 (LPNTSIIIPF…VNWLPPLLDR (110 aa)) form a catalytic subdomain A region. Residues D185 and R214 each contribute to the substrate site. Position 237 (D237) interacts with Mn(2+). Substrate is bound at residue S238. Position 239 (H239) interacts with Mn(2+). Residues 311–373 (PFESPVMAGG…PCSRVGHIYR (63 aa)) are catalytic subdomain B. Substrate is bound at residue W342. H370 lines the Mn(2+) pocket. Positions 373 and 378 each coordinate substrate. Residues 373–384 (RKYVPYKVPAGV) are flexible loop. The 133-residue stretch at 458–590 (AAWGEIRNVG…SSLTQQWLFE (133 aa)) folds into the Ricin B-type lectin domain. N593 carries an N-linked (GlcNAc...) asparagine glycan.

This sequence belongs to the glycosyltransferase 2 family. GalNAc-T subfamily. It depends on Mn(2+) as a cofactor. Expressed at higher level than GALNT9. In the developing hindbrain region of 14.5 dpc embryos it accumulates in the rapidly dividing, undifferentiated ventricular zone adjacent to the pons. It also accumulates in the regions immediately rostral and caudal to the dorsal rhombic lips differentiating into the cerebellum. Not expressed in the developing choroid plexus.

Its subcellular location is the golgi apparatus membrane. The catalysed reaction is L-seryl-[protein] + UDP-N-acetyl-alpha-D-galactosamine = a 3-O-[N-acetyl-alpha-D-galactosaminyl]-L-seryl-[protein] + UDP + H(+). It catalyses the reaction L-threonyl-[protein] + UDP-N-acetyl-alpha-D-galactosamine = a 3-O-[N-acetyl-alpha-D-galactosaminyl]-L-threonyl-[protein] + UDP + H(+). It participates in protein modification; protein glycosylation. Its function is as follows. Catalyzes the initial reaction in O-linked oligosaccharide biosynthesis, the transfer of an N-acetyl-D-galactosamine residue to a serine or threonine residue on the protein receptor. Has activity toward Muc5Ac and EA2 peptide substrates. The chain is Polypeptide N-acetylgalactosaminyltransferase 10 (Galnt10) from Mus musculus (Mouse).